A 244-amino-acid polypeptide reads, in one-letter code: MTHSKTDRLYANPLAQVSQFVFDENVVDVFPDMIKRSVPGYATIINMIGNLAERYTQSGSQCYDLGCSLGAATLAMRHRIQAADCKIIGVDSSAAMLQRCAQIMAADTSDIPVDLVEARIQDVPITNASVAVLNFTLQFIPLDERQSVLNNICAGLRPNGVLILSEKLAFEDETHQQLMIDLHHNFKRANGYSDLEIAQKRTSIENYLIPETLAAHRHRLRTAGFHSVDVWFQCFNFASLIAIK.

S-adenosyl-L-methionine-binding positions include tyrosine 41, 66 to 68, asparagine 134, and arginine 201; that span reads GCS.

The protein belongs to the class I-like SAM-binding methyltransferase superfamily. Cx-SAM synthase family. Homodimer.

It carries out the reaction prephenate + S-adenosyl-L-methionine = carboxy-S-adenosyl-L-methionine + 3-phenylpyruvate + H2O. Functionally, catalyzes the conversion of S-adenosyl-L-methionine (SAM) to carboxy-S-adenosyl-L-methionine (Cx-SAM). The protein is Carboxy-S-adenosyl-L-methionine synthase of Cellvibrio japonicus (strain Ueda107) (Pseudomonas fluorescens subsp. cellulosa).